Here is a 396-residue protein sequence, read N- to C-terminus: MALKFHPLTSQSPKLPSFRMPQLASLRSPKFVMASTLRSTSREVETLKKPFMPPREVHLQVTHSMPPQKMEIFKSLEDWAEENLLVHLKPVERCWQPQDFLPDSAFEGFHEQVRELRERAKELPDEYFVVLVGDMITEEALPTYQTMLNTLDGVRDETGASPTPWAIWTRAWTAEENRHGDLLNKYLYLSGRVDMRQVEKTIQYLIGSGMDPRTENNPYLGFIYTSFQERATFISHGNTARLAKEHGDIKLAQICGTITADEKRHETAYTKIVEKLFEIDPEGTVIAFEEMMRKKVSMPAHLMYDGRDDNLFHHFSAVAQRLGVYTAKDYADILEFLVGRWKVESLTGLSGEGQKAQDYVCALPARIRKLEERAQGRAKEGPTIPFSWIFDRQVKL.

Residues 1–33 (MALKFHPLTSQSPKLPSFRMPQLASLRSPKFVM) constitute a chloroplast transit peptide. Fe cation contacts are provided by Glu-138, Glu-176, His-179, Glu-229, Glu-262, and His-265.

It belongs to the fatty acid desaturase type 2 family. Homodimer. The cofactor is Fe(2+).

It localises to the plastid. The protein resides in the chloroplast. It participates in lipid metabolism; fatty acid metabolism. Introduces a cis double bond in the acyl chain of an acyl-[acyl-carrier protein]. In Cucumis sativus (Cucumber), this protein is Acyl-[acyl-carrier-protein] desaturase, chloroplastic.